Reading from the N-terminus, the 743-residue chain is MSLHREPTATEVKEQKIYREMGLTDEEFALVESILGRLPNYTETGLFSVMWSEHCSYKNSKVLLKKFPIDGDKVLQGPGEGAGIIDIGDEQAVVFKIESHNHPSAIEPYQGAATGVGGILRDVFSMGARPISLLNSLRFGELTSPKVRYLFEEVVAGIAGYGNCVGVPTVGGEVQFDPCYEGNPLVNAMCVGLIDHKDIQKGQAKGVGNTVMYVGASTGRDGIHGATFASEELSEASEEKRPAVQVGDPFMEKLLLEACLELIKSDALVGIQDMGAAGLTSSSAEMASKAGSGIEMNLDHVPQREKGMTPYEMMLSESQERMLIVVKKGREQEIKDIVAHWGLHAVEVGQVTDDKKLRLLHKGEVVADVPVDALAEDAPVYHKPSKVPAYYEAFQSEKTQWIPTIANVKDTLLSLLQQPTIASKEWVYEQYDYMVQTNTVVSPGSDAAVVRIRGTKKALAMTTDCNSRYLFLDPEVGGKIAIAEAARNIVCSGGVPLGVTDCLNYGNPEKPEIFWQLEKSTDGMSEACRELGTPVIGGNVSLYNETNGVAVYPTPVIGMVGLIEDVGHITTQAFKKAGDLIYVIGEAKAEFGGSELQKLVNGEISGKAPAIDLAVEKKRQEQLLEAIRAGAVASAHDIAEGGLAVALAESMMGEAVGADVVIDGEWTTELFAESQSRFLVSVPKEKQAIFESLVEDAIHLGQVTDHPQLNIQDVNGAQVLQASVNEMLEAWKGAIPCLLKSKA.

Residue H54 is part of the active site. Positions 57 and 96 each coordinate ATP. E98 serves as a coordination point for Mg(2+). Residues S99–H102 and R121 contribute to the substrate site. The Proton acceptor role is filled by H100. D122 lines the Mg(2+) pocket. Q245 is a substrate binding site. D273 contacts Mg(2+). E317–Q319 serves as a coordination point for substrate. Residues D501 and G538 each coordinate ATP. N539 serves as a coordination point for Mg(2+). A substrate-binding site is contributed by S541.

This sequence belongs to the FGAMS family. As to quaternary structure, monomer. Part of the FGAM synthase complex composed of 1 PurL, 1 PurQ and 2 PurS subunits.

It localises to the cytoplasm. It carries out the reaction N(2)-formyl-N(1)-(5-phospho-beta-D-ribosyl)glycinamide + L-glutamine + ATP + H2O = 2-formamido-N(1)-(5-O-phospho-beta-D-ribosyl)acetamidine + L-glutamate + ADP + phosphate + H(+). The protein operates within purine metabolism; IMP biosynthesis via de novo pathway; 5-amino-1-(5-phospho-D-ribosyl)imidazole from N(2)-formyl-N(1)-(5-phospho-D-ribosyl)glycinamide: step 1/2. In terms of biological role, part of the phosphoribosylformylglycinamidine synthase complex involved in the purines biosynthetic pathway. Catalyzes the ATP-dependent conversion of formylglycinamide ribonucleotide (FGAR) and glutamine to yield formylglycinamidine ribonucleotide (FGAM) and glutamate. The FGAM synthase complex is composed of three subunits. PurQ produces an ammonia molecule by converting glutamine to glutamate. PurL transfers the ammonia molecule to FGAR to form FGAM in an ATP-dependent manner. PurS interacts with PurQ and PurL and is thought to assist in the transfer of the ammonia molecule from PurQ to PurL. The sequence is that of Phosphoribosylformylglycinamidine synthase subunit PurL from Halalkalibacterium halodurans (strain ATCC BAA-125 / DSM 18197 / FERM 7344 / JCM 9153 / C-125) (Bacillus halodurans).